Here is a 208-residue protein sequence, read N- to C-terminus: Outer-membrane lipoprotein carrier protein (208 aa).

The N-terminal stretch at 1 to 22 is a signal peptide; that stretch reads MKKIFTIAALSLPLFCHLPAMA.

The protein belongs to the LolA family. Monomer.

The protein localises to the periplasm. Participates in the translocation of lipoproteins from the inner membrane to the outer membrane. Only forms a complex with a lipoprotein if the residue after the N-terminal Cys is not an aspartate (The Asp acts as a targeting signal to indicate that the lipoprotein should stay in the inner membrane). The polypeptide is Outer-membrane lipoprotein carrier protein (Shewanella pealeana (strain ATCC 700345 / ANG-SQ1)).